A 285-amino-acid polypeptide reads, in one-letter code: Foldase protein PrsA 2 (285 aa).

The signal sequence occupies residues 1 to 20; sequence MRGKHIFIITALISILMLSA. The N-palmitoyl cysteine moiety is linked to residue Cys-21. Cys-21 carries S-diacylglycerol cysteine lipidation. Residues 134 to 224 form the PpiC domain; sequence KPEIKASHIL…NGYHVIKLTD (91 aa).

It belongs to the PrsA family.

It localises to the cell membrane. It catalyses the reaction [protein]-peptidylproline (omega=180) = [protein]-peptidylproline (omega=0). Functionally, plays a major role in protein secretion by helping the post-translocational extracellular folding of several secreted proteins. This is Foldase protein PrsA 2 (prsA2) from Bacillus cereus (strain ATCC 14579 / DSM 31 / CCUG 7414 / JCM 2152 / NBRC 15305 / NCIMB 9373 / NCTC 2599 / NRRL B-3711).